The primary structure comprises 269 residues: Protein-L-isoaspartate O-methyltransferase (269 aa).

The segment at 1–53 is disordered; it reads MSAGQRPAPKFPLRLDQVKPAGRSGAAPLLRPQRPLHQAATERGRGTTPAGLG. Residue Ser113 is part of the active site.

Belongs to the methyltransferase superfamily. L-isoaspartyl/D-aspartyl protein methyltransferase family.

The protein resides in the cytoplasm. The enzyme catalyses [protein]-L-isoaspartate + S-adenosyl-L-methionine = [protein]-L-isoaspartate alpha-methyl ester + S-adenosyl-L-homocysteine. Catalyzes the methyl esterification of L-isoaspartyl residues in peptides and proteins that result from spontaneous decomposition of normal L-aspartyl and L-asparaginyl residues. It plays a role in the repair and/or degradation of damaged proteins. The chain is Protein-L-isoaspartate O-methyltransferase from Methylibium petroleiphilum (strain ATCC BAA-1232 / LMG 22953 / PM1).